Reading from the N-terminus, the 247-residue chain is UPF0280 protein MMP1236 (247 aa).

The protein belongs to the UPF0280 family.

The chain is UPF0280 protein MMP1236 from Methanococcus maripaludis (strain DSM 14266 / JCM 13030 / NBRC 101832 / S2 / LL).